The primary structure comprises 272 residues: Sugar-phosphatase AraL (272 aa).

It belongs to the HAD-like hydrolase superfamily. It depends on Mg(2+) as a cofactor.

The catalysed reaction is sugar phosphate + H2O = sugar + phosphate.. It carries out the reaction O-phospho-L-serine + H2O = L-serine + phosphate. It catalyses the reaction O-phospho-D-serine + H2O = D-serine + phosphate. Functionally, catalyzes the dephosphorylation of C5 and C6 carbon sugars in vitro. Catalyzes the dephosphorylation of 3'-AMP and phosphoserine in vitro. The sequence is that of Sugar-phosphatase AraL (araL) from Bacillus subtilis (strain 168).